Consider the following 605-residue polypeptide: Apoptosis-inducing factor 3 (605 aa).

A compositionally biased stretch (basic and acidic residues) spans 18 to 29 (VLPEKERGKEEL). Positions 18 to 44 (VLPEKERGKEELSASGKGSPRGYQGNG) are disordered. The Rieske domain maps to 70 to 165 (ATVCHVKDLE…VKIEKEKVTI (96 aa)). Cysteine 109, histidine 111, cysteine 128, and histidine 131 together coordinate [2Fe-2S] cluster. FAD-binding positions include 201–205 (GAGAA), arginine 235, lysine 240, valine 270, aspartate 467, and tryptophan 514.

Belongs to the FAD-dependent oxidoreductase family.

It localises to the mitochondrion. Its function is as follows. Induces apoptosis through a caspase dependent pathway. Reduces mitochondrial membrane potential. The protein is Apoptosis-inducing factor 3 (Aifm3) of Mus musculus (Mouse).